The primary structure comprises 130 residues: Anti-adapter protein IraD (130 aa).

The protein belongs to the GpW/Gp25 family. IraD subfamily. In terms of assembly, interacts with RssB.

The protein localises to the cytoplasm. Inhibits RpoS proteolysis by regulating RssB activity, thereby increasing the stability of the sigma stress factor RpoS during oxidative stress. Its effect on RpoS stability is due to its interaction with RssB, which probably blocks the interaction of RssB with RpoS, and the consequent delivery of the RssB-RpoS complex to the ClpXP protein degradation pathway. This Escherichia coli O157:H7 protein is Anti-adapter protein IraD.